A 442-amino-acid chain; its full sequence is DNA topoisomerase 6 subunit A3 (442 aa).

The tract at residues 1–34 is disordered; the sequence is MSEKKRRGGAGAGAASGSASKKPRVSTAASYAES. Residues 91–224 form the Topo IIA-type catalytic domain; that stretch reads QDSASVTSRI…LHVVASEKGV (134 aa). The active-site O-(5'-phospho-DNA)-tyrosine intermediate is the Tyr-185. Positions 271 and 323 each coordinate Mg(2+).

It belongs to the TOP6A family. In terms of assembly, homodimer. Heterotetramer of two TOP6A and two TOP6B subunits. Interacts with TOP6B. It depends on Mg(2+) as a cofactor. In terms of tissue distribution, highly expressed in flowers before pollination. Expressed in roots and shoots.

It is found in the nucleus. It carries out the reaction ATP-dependent breakage, passage and rejoining of double-stranded DNA.. Its function is as follows. Component of the DNA topoisomerase VI involved in chromatin organization and progression of endoreduplication cycles. Relaxes both positive and negative superturns and exhibits a strong decatenase activity. May be involved in cell proliferation and stress tolerance. The polypeptide is DNA topoisomerase 6 subunit A3 (Oryza sativa subsp. indica (Rice)).